A 115-amino-acid chain; its full sequence is Nitrogen regulatory protein P-II 1 (115 aa).

Y54 is subject to O-UMP-tyrosine.

The protein belongs to the P(II) protein family.

Functionally, could be involved in the regulation of nitrogen fixation. The chain is Nitrogen regulatory protein P-II 1 from Methanothermobacter thermautotrophicus (strain ATCC 29096 / DSM 1053 / JCM 10044 / NBRC 100330 / Delta H) (Methanobacterium thermoautotrophicum).